Here is an 89-residue protein sequence, read N- to C-terminus: Small ribosomal subunit protein uS15c (89 aa).

It belongs to the universal ribosomal protein uS15 family. As to quaternary structure, part of the 30S ribosomal subunit.

The protein resides in the plastid. This chain is Small ribosomal subunit protein uS15c (rps15), found in Aneura mirabilis (Parasitic liverwort).